The following is a 208-amino-acid chain: Protein-L-isoaspartate O-methyltransferase (208 aa).

The active site involves Ser-59.

Belongs to the methyltransferase superfamily. L-isoaspartyl/D-aspartyl protein methyltransferase family.

Its subcellular location is the cytoplasm. It catalyses the reaction [protein]-L-isoaspartate + S-adenosyl-L-methionine = [protein]-L-isoaspartate alpha-methyl ester + S-adenosyl-L-homocysteine. Functionally, catalyzes the methyl esterification of L-isoaspartyl residues in peptides and proteins that result from spontaneous decomposition of normal L-aspartyl and L-asparaginyl residues. It plays a role in the repair and/or degradation of damaged proteins. The sequence is that of Protein-L-isoaspartate O-methyltransferase from Pectobacterium atrosepticum (strain SCRI 1043 / ATCC BAA-672) (Erwinia carotovora subsp. atroseptica).